A 257-amino-acid polypeptide reads, in one-letter code: MSVPLILTILAGAATFIGAFLGVLGQKPSNRLLAFSLGFAAGIMLLISLMEMLPAALAAEGMSPVLGYGMFIFGLLGYFGLDRMLPHAHPQDLMQKSVQPLPKSIKRTAILLTLGISLHNFPEGIATFVTASSNLELGFGIALAVALHNIPEGLAVAGPVYAATGSKRTAILWAGISGLAEILGGVLAWLILGSMISPVVMAAIMAVVAGIMVALSVDELMPLAKEIDPNNNPSYGVLCGMSVMGFSLVLLQTAGIG.

3 helical membrane-spanning segments follow: residues 5–25 (LILTILAGAATFIGAFLGVLG), 32–52 (LLAFSLGFAAGIMLLISLMEM), and 61–81 (GMSPVLGYGMFIFGLLGYFGL). Residues Asn120 and Glu123 each coordinate Fe(2+). Glu123 and His148 together coordinate Zn(2+). 4 helical membrane passes run 137 to 157 (LGFGIALAVALHNIPEGLAVA), 171 to 191 (ILWAGISGLAEILGGVLAWLI), 195 to 215 (MISPVVMAAIMAVVAGIMVAL), and 236 to 256 (GVLCGMSVMGFSLVLLQTAGI). Fe(2+) is bound by residues Asn149, Glu152, and Glu181. Zn(2+) is bound at residue Glu152.

The protein belongs to the ZIP transporter (TC 2.A.5) family. ZupT subfamily.

The protein resides in the cell inner membrane. The enzyme catalyses Zn(2+)(in) = Zn(2+)(out). In terms of biological role, mediates zinc uptake. May also transport other divalent cations. The chain is Zinc transporter ZupT from Escherichia coli O7:K1 (strain IAI39 / ExPEC).